Consider the following 82-residue polypeptide: ATP synthase subunit c (82 aa).

2 consecutive transmembrane segments (helical) span residues 7 to 27 (LVAL…CIGI) and 53 to 73 (FLLA…AMLF).

It belongs to the ATPase C chain family. In terms of assembly, F-type ATPases have 2 components, F(1) - the catalytic core - and F(0) - the membrane proton channel. F(1) has five subunits: alpha(3), beta(3), gamma(1), delta(1), epsilon(1). F(0) has three main subunits: a(1), b(2) and c(10-14). The alpha and beta chains form an alternating ring which encloses part of the gamma chain. F(1) is attached to F(0) by a central stalk formed by the gamma and epsilon chains, while a peripheral stalk is formed by the delta and b chains.

It localises to the cell inner membrane. Its function is as follows. F(1)F(0) ATP synthase produces ATP from ADP in the presence of a proton or sodium gradient. F-type ATPases consist of two structural domains, F(1) containing the extramembraneous catalytic core and F(0) containing the membrane proton channel, linked together by a central stalk and a peripheral stalk. During catalysis, ATP synthesis in the catalytic domain of F(1) is coupled via a rotary mechanism of the central stalk subunits to proton translocation. Functionally, key component of the F(0) channel; it plays a direct role in translocation across the membrane. A homomeric c-ring of between 10-14 subunits forms the central stalk rotor element with the F(1) delta and epsilon subunits. The chain is ATP synthase subunit c from Leptothrix cholodnii (strain ATCC 51168 / LMG 8142 / SP-6) (Leptothrix discophora (strain SP-6)).